The primary structure comprises 435 residues: Probable aminotransferase gliI (435 aa).

Lysine 266 carries the N6-(pyridoxal phosphate)lysine modification.

It belongs to the class-I pyridoxal-phosphate-dependent aminotransferase family. Requires pyridoxal 5'-phosphate as cofactor.

It participates in mycotoxin biosynthesis. In terms of biological role, probable aminotransferase; part of the gene cluster that mediates the biosynthesis of gliotoxin, a member of the epipolythiodioxopiperazine (ETP) class of toxins characterized by a disulfide bridged cyclic dipeptide. The first step in gliotoxin biosynthesis is the condensation of serine and phenylalanine to form the cyclo-L-phenylalanyl-L-serine diketopiperazine (DKP) by the NRPS gliP. GliP is also able to produce the DKP cyclo-L-tryptophanyl-L-serine, suggesting that the substrate specificity of the first adenylation (A) domain in gliP is sufficiently relaxed to accommodate both L-Phe and L-Trp. The cytochrome P450 monooxygenase gliC has been shown to catalyze the subsequent hydroxylation of the alpha-carbon of L-Phe in cyclo-L-phenylalanyl-L-serine whereas the second cytochrome P450 enzyme, gliF, is presumably involved in the modification of the DKP side chain. The glutathione S-transferase (GST) gliG then forms a bis-glutathionylated biosynthetic intermediate which is responsible for the sulfurization of gliotoxin. This bis-glutathionylated intermediate is subsequently processed by the gamma-glutamyl cyclotransferase gliK to remove both gamma-glutamyl moieties. Subsequent processing via gliI yields a biosynthetic intermediate, which is N-methylated via the N-methyltransferase gliN, before the gliotoxin oxidoreductase gliT-mediated disulfide bridge closure. GliN-mediated amide methylation confers stability to ETP, damping the spontaneous formation of tri- and tetrasulfides. Intracellular dithiol gliotoxin oxidized by gliT is subsequently effluxed by gliA. Gliotoxin contributes to pathogenesis during invasive aspergillosis. In macrophages and neutrophils, gliotoxin showed inhibition of various different cell functions including cytokine production, antigen presentation, phagocytosis, and production of reactive oxygen species. The sequence is that of Probable aminotransferase gliI from Aspergillus fumigatus (strain ATCC MYA-4609 / CBS 101355 / FGSC A1100 / Af293) (Neosartorya fumigata).